Consider the following 1128-residue polypeptide: Major DNA-binding protein (1128 aa).

Residues 1104 to 1128 (LGGGGQGSGGRRKRRLATVLPGLEV) form a required for nuclear localization region.

It belongs to the herpesviridae major DNA-binding protein family. In terms of assembly, homooligomers. Forms double-helical filaments necessary for the formation of replication compartments within the host nucleus. Interacts with the origin-binding protein. Interacts with the helicase primase complex; this interaction stimulates primer synthesis activity of the helicase-primase complex. Interacts with the DNA polymerase. Interacts with the alkaline exonuclease; this interaction increases its nuclease processivity.

The protein resides in the virion tegument. Its subcellular location is the host nucleus. Functionally, plays several crucial roles in viral infection. Participates in the opening of the viral DNA origin to initiate replication by interacting with the origin-binding protein. May disrupt loops, hairpins and other secondary structures present on ssDNA to reduce and eliminate pausing of viral DNA polymerase at specific sites during elongation. Promotes viral DNA recombination by performing strand-transfer, characterized by the ability to transfer a DNA strand from a linear duplex to a complementary single-stranded DNA circle. Can also catalyze the renaturation of complementary single strands. Additionally, reorganizes the host cell nucleus, leading to the formation of prereplicative sites and replication compartments. This process is driven by the protein which can form double-helical filaments in the absence of DNA. The protein is Major DNA-binding protein of Epstein-Barr virus (strain GD1) (HHV-4).